The primary structure comprises 541 residues: Protein yellow (541 aa).

The first 21 residues, 1–21 (MFQDKGWVLLTLITLVSPSWA), serve as a signal peptide directing secretion. Residue asparagine 144 is glycosylated (N-linked (GlcNAc...) asparagine).

It belongs to the major royal jelly protein family.

The protein localises to the secreted. Functionally, controls the pigmentation pattern of the adult cuticle and larval mouth parts. The sequence is that of Protein yellow (y) from Drosophila yakuba (Fruit fly).